Here is a 212-residue protein sequence, read N- to C-terminus: Probable chemoreceptor glutamine deamidase CheD (212 aa).

It belongs to the CheD family.

The enzyme catalyses L-glutaminyl-[protein] + H2O = L-glutamyl-[protein] + NH4(+). Its function is as follows. Probably deamidates glutamine residues to glutamate on methyl-accepting chemotaxis receptors (MCPs), playing an important role in chemotaxis. This Bordetella parapertussis (strain 12822 / ATCC BAA-587 / NCTC 13253) protein is Probable chemoreceptor glutamine deamidase CheD.